Reading from the N-terminus, the 328-residue chain is Global transcription regulator sge1 (328 aa).

2 disordered regions span residues 94 to 120 (PGEK…PRQR) and 251 to 293 (QMHQ…QYVH). Low complexity-rich tracts occupy residues 106–116 (KSTTQSGGISK), 251–261 (QMHQPQVHQPL), and 282–293 (AHQPQVHQQYVH).

Belongs to the MIT1/WOR1 family.

The protein resides in the nucleus. Its function is as follows. Global transcriptional regulator of transcription that impacts, but is not absolutely required for secondary metabolism and pathogenicity on maize. Regulates synthesis of multiple secondary metabolites, including fumonisins and fusarins. This chain is Global transcription regulator sge1, found in Gibberella moniliformis (strain M3125 / FGSC 7600) (Maize ear and stalk rot fungus).